The chain runs to 887 residues: Phosphatidylinositol 3-kinase catalytic subunit type 3 (887 aa).

A C2 PI3K-type domain is found at 35–184; the sequence is YKAVLEDPML…LAKLTKAHRQ (150 aa). Positions 150–170 are disordered; it reads EADGSEPTKTPGRTSSTLSED. Over residues 156-170 the composition is skewed to polar residues; the sequence is PTKTPGRTSSTLSED. The residue at position 163 (threonine 163) is a Phosphothreonine; by AMPK. Residue serine 165 is modified to Phosphoserine; by AMPK. Residues serine 244, serine 261, and serine 282 each carry the phosphoserine modification. The PIK helical domain maps to 282–520; the sequence is SDHGLKPNAA…PKTHEMYLNV (239 aa). Disordered regions lie at residues 416-435 and 446-468; these read EPTK…NSGI and ITSP…SSDG. Residues 423 to 435 are compositionally biased toward low complexity; it reads QGSVSESVSNSGI. Residues 449–459 show a composition bias toward pro residues; sequence PLPPVSSPPPA. Residues 605 to 871 form the PI3K/PI4K catalytic domain; the sequence is IPETATLFKS…LIDESVHALF (267 aa). The tract at residues 611 to 617 is G-loop; it reads LFKSALM. Residues 740 to 748 form a catalytic loop region; that stretch reads GVGDRHLDN. The interval 759–780 is activation loop; it reads HIDFGYILGRDPKPLPPPMKLN.

The protein belongs to the PI3/PI4-kinase family. As to quaternary structure, component of the PI3K (PI3KC3/PI3K-III/class III phosphatidylinositol 3-kinase) complex the core of which is composed of the catalytic subunit PIK3C3, the regulatory subunit PIK3R4 and BECN1 associating with additional regulatory/auxiliary subunits to form alternative complex forms. Alternative complex forms containing a fourth regulatory subunit in a mutually exclusive manner are: the PI3K complex I (PI3KC3-C1) containing ATG14, and the PI3K complex II (PI3KC3-C2) containing UVRAG. PI3KC3-C1 displays a V-shaped architecture with PIK3R4 serving as a bridge between PIK3C3 and the ATG14:BECN1 subcomplex. Both, PI3KC3-C1 and PI3KC3-C2, can associate with further regulatory subunits such as RUBCN, SH3GLB1/Bif-1 and AMBRA1. PI3KC3-C1 probably associates with PIK3CB. Interacts with RAB7A in the presence of PIK3R4. Interacts with AMBRA1. Interacts with BECN1P1/BECN2. Interacts with SLAMF1. May be a component of a complex composed of RAB5A (in GDP-bound form), DYN2 and PIK3C3. Interacts with NCKAP1L. Interacts with ATG14; this interaction is increased in the absence of TMEM39A. Interacts with STEEP1; the interaction is STING1-dependent and required for trafficking of STING1 from the endoplasmic reticulum. Interacts with YWHAG. Interacts with ARMC3. Requires Mn(2+) as cofactor. In terms of processing, ubiquitinated via 'Lys-29'- and 'Lys-48'-linked ubiquitination by UBE3C, promoting its degradation. Deubiquitination by ZRANB1/TRABID promotes its stabilization, leading to autophagosome maturation.

It is found in the midbody. The protein localises to the late endosome. Its subcellular location is the cytoplasmic vesicle. It localises to the autophagosome. It carries out the reaction a 1,2-diacyl-sn-glycero-3-phospho-(1D-myo-inositol) + ATP = a 1,2-diacyl-sn-glycero-3-phospho-(1D-myo-inositol-3-phosphate) + ADP + H(+). Catalytic subunit of the PI3K complex that mediates formation of phosphatidylinositol 3-phosphate; different complex forms are believed to play a role in multiple membrane trafficking pathways: PI3KC3-C1 is involved in initiation of autophagosomes and PI3KC3-C2 in maturation of autophagosomes and endocytosis. As part of PI3KC3-C1, promotes endoplasmic reticulum membrane curvature formation prior to vesicle budding. Involved in regulation of degradative endocytic trafficking and required for the abscission step in cytokinesis, probably in the context of PI3KC3-C2. Involved in the transport of lysosomal enzyme precursors to lysosomes. Required for transport from early to late endosomes. In Sus scrofa (Pig), this protein is Phosphatidylinositol 3-kinase catalytic subunit type 3.